A 1555-amino-acid chain; its full sequence is Probable serine/threonine-protein kinase DDB_G0276181 (1555 aa).

Disordered regions lie at residues 1–54 (MTSV…NNSF), 138–208 (IIQQ…NSKL), 342–452 (KLKK…DSPF), 486–508 (TTTT…IKPL), and 781–850 (NNIN…NQNT). Composition is skewed to low complexity over residues 14–53 (NNSG…NNNS), 138–205 (IIQQ…NNNN), 359–378 (SNIA…KING), and 395–431 (NNSQ…SKKP). The PH domain occupies 58-238 (QVLHTGYLTK…WIEMIKLAIS (181 aa)). Polar residues predominate over residues 437-452 (RNISTSDNGSGTDSPF). 2 stretches are compositionally biased toward low complexity: residues 486–504 (TTTT…TNTN) and 781–832 (NNIN…NNNN). The span at 833-850 (GSGLLSSSPLITISNQNT) shows a compositional bias: polar residues. Positions 986–1309 (VVLHERLGTG…TIIHSISKMI (324 aa)) constitute a Protein kinase domain. 992–1000 (LGTGATGDI) provides a ligand contact to ATP. Residues 1012–1031 (RHISNQDSSGSNSSGSGSGH) are disordered. Lys1061 provides a ligand contact to ATP. Residue Asp1156 is the Proton acceptor of the active site. Positions 1340-1376 (VQNNNNNSNNNNNNNNNNNNNNSNSNLNNCNNSSPNL) are enriched in low complexity. Disordered regions lie at residues 1340-1383 (VQNN…SANN) and 1457-1480 (KKSS…GSSR).

Belongs to the protein kinase superfamily. TKL Ser/Thr protein kinase family.

The enzyme catalyses L-seryl-[protein] + ATP = O-phospho-L-seryl-[protein] + ADP + H(+). It catalyses the reaction L-threonyl-[protein] + ATP = O-phospho-L-threonyl-[protein] + ADP + H(+). This chain is Probable serine/threonine-protein kinase DDB_G0276181, found in Dictyostelium discoideum (Social amoeba).